The following is a 388-amino-acid chain: Splicing factor 3B subunit 4 (388 aa).

2 consecutive RRM domains span residues 13 to 91 (ATIY…KASA) and 100 to 179 (ANIF…YAFK). The interval 244 to 388 (QPPPLMGMAQ…GMIPPPPPPS (145 aa)) is disordered. 3 stretches are compositionally biased toward pro residues: residues 261 to 325 (PPVP…PSRF), 333 to 355 (MPPP…PPRY), and 362 to 388 (MYPP…PPPS).

The protein belongs to the SF3B4 family.

It is found in the nucleus. Functionally, subunit of the splicing factor SF3B required for 'A' complex assembly formed by the stable binding of U2 snRNP to the branchpoint sequence (BPS) in pre-mRNA. Sequence independent binding of SF3A/SF3B complex upstream of the branch site is essential, it may anchor U2 snRNP to the pre-mRNA. May also be involved in the assembly of the 'E' complex. SF3B4 has been found in complex 'B' and 'C' as well. Belongs also to the minor U12-dependent spliceosome, which is involved in the splicing of rare class of nuclear pre-mRNA intron. This is Splicing factor 3B subunit 4 (sap-49) from Caenorhabditis elegans.